A 240-amino-acid polypeptide reads, in one-letter code: Triosephosphate isomerase (240 aa).

8 to 10 provides a ligand contact to substrate; it reads NWK. The active-site Electrophile is the histidine 93. Catalysis depends on glutamate 160, which acts as the Proton acceptor. Glycine 166 contributes to the substrate binding site.

It belongs to the triosephosphate isomerase family. Homodimer.

It localises to the cytoplasm. It catalyses the reaction D-glyceraldehyde 3-phosphate = dihydroxyacetone phosphate. The protein operates within carbohydrate biosynthesis; gluconeogenesis. It functions in the pathway carbohydrate degradation; glycolysis; D-glyceraldehyde 3-phosphate from glycerone phosphate: step 1/1. In terms of biological role, involved in the gluconeogenesis. Catalyzes stereospecifically the conversion of dihydroxyacetone phosphate (DHAP) to D-glyceraldehyde-3-phosphate (G3P). In Ehrlichia chaffeensis (strain ATCC CRL-10679 / Arkansas), this protein is Triosephosphate isomerase.